Consider the following 410-residue polypeptide: Cytochrome P450 (410 aa).

Cys359 is a binding site for heme.

It belongs to the cytochrome P450 family. Requires heme as cofactor.

This is Cytochrome P450 (cypA) from Bacillus subtilis (strain 168).